The primary structure comprises 250 residues: Coproheme decarboxylase (250 aa).

Residues arginine 131, 145–149 (YPMNK), histidine 172, and glutamine 185 contribute to the Fe-coproporphyrin III site. Tyrosine 145 is a catalytic residue.

Belongs to the ChdC family. Type 1 subfamily. Fe-coproporphyrin III serves as cofactor.

It catalyses the reaction Fe-coproporphyrin III + 2 H2O2 + 2 H(+) = heme b + 2 CO2 + 4 H2O. The catalysed reaction is Fe-coproporphyrin III + H2O2 + H(+) = harderoheme III + CO2 + 2 H2O. The enzyme catalyses harderoheme III + H2O2 + H(+) = heme b + CO2 + 2 H2O. It functions in the pathway porphyrin-containing compound metabolism; protoheme biosynthesis. Involved in coproporphyrin-dependent heme b biosynthesis. Catalyzes the decarboxylation of Fe-coproporphyrin III (coproheme) to heme b (protoheme IX), the last step of the pathway. The reaction occurs in a stepwise manner with a three-propionate intermediate. The protein is Coproheme decarboxylase of Staphylococcus aureus (strain MRSA252).